Consider the following 185-residue polypeptide: Elongation factor P (185 aa).

It belongs to the elongation factor P family.

The protein localises to the cytoplasm. The protein operates within protein biosynthesis; polypeptide chain elongation. In terms of biological role, involved in peptide bond synthesis. Stimulates efficient translation and peptide-bond synthesis on native or reconstituted 70S ribosomes in vitro. Probably functions indirectly by altering the affinity of the ribosome for aminoacyl-tRNA, thus increasing their reactivity as acceptors for peptidyl transferase. The polypeptide is Elongation factor P (Symbiobacterium thermophilum (strain DSM 24528 / JCM 14929 / IAM 14863 / T)).